Reading from the N-terminus, the 95-residue chain is Large ribosomal subunit protein uL23 (95 aa).

This sequence belongs to the universal ribosomal protein uL23 family. As to quaternary structure, part of the 50S ribosomal subunit. Contacts protein L29, and trigger factor when it is bound to the ribosome.

Functionally, one of the early assembly proteins it binds 23S rRNA. One of the proteins that surrounds the polypeptide exit tunnel on the outside of the ribosome. Forms the main docking site for trigger factor binding to the ribosome. The chain is Large ribosomal subunit protein uL23 from Pelotomaculum thermopropionicum (strain DSM 13744 / JCM 10971 / SI).